Here is a 494-residue protein sequence, read N- to C-terminus: MLALSRSKYFAFLTGTVGGLLAGVGLSQGGVVFIWISTACLWASMAFPSAVFLWGLFAILLSYRWLLYLHPLTWIGVPIAFSLPIAILIWFSCGLLGGLLVALWSLIGQIPFFQRRLNSSTKDQLLYVIALSLIWGLVEVGLAKSPFFWFGLGDSLLPYDRWLAGLARWFGSGGLAALQLILGWWVWKIIFAFKKGSPWLGLFALGVCSLLLAHCIGWILLADNEFTSSKRIALWQTNIPTRQKFTLRELKRLPISLQDALEEADNLGADWMVAPEGTLSAGQNLLAPSPLPLLSGGFRRVKNKQMSSLLVFNEGSTSYSSAIDKHRLVPLGEWLPSLPGVNWNGLSFVGGVDPGDASRFFDWDGGPLAVAICYELSDGNNLAKAIFDGAEWILAIANLDPYPISLQRQFLALAQLRSIESARNLISVANTGPTSMILSSGKIKSIIEPFNEGVGVIDINVSQKISGYVRWGEIPLISSLLIVLCFIARLKGKA.

6 helical membrane-spanning segments follow: residues 16 to 36, 41 to 61, 62 to 82, 133 to 153, 173 to 193, and 202 to 222; these read TVGG…FIWI, LWAS…AILL, SYRW…IAFS, LIWG…FGLG, GGLA…IFAF, and LFAL…ILLA. Residues 235 to 461 form the CN hydrolase domain; that stretch reads WQTNIPTRQK…EGVGVIDINV (227 aa). Glutamate 276 acts as the Proton acceptor in catalysis. Residue lysine 325 is part of the active site. Cysteine 373 functions as the Nucleophile in the catalytic mechanism. A helical membrane pass occupies residues 468-488; it reads YVRWGEIPLISSLLIVLCFIA.

The protein belongs to the CN hydrolase family. Apolipoprotein N-acyltransferase subfamily.

It localises to the cell inner membrane. The catalysed reaction is N-terminal S-1,2-diacyl-sn-glyceryl-L-cysteinyl-[lipoprotein] + a glycerophospholipid = N-acyl-S-1,2-diacyl-sn-glyceryl-L-cysteinyl-[lipoprotein] + a 2-acyl-sn-glycero-3-phospholipid + H(+). The protein operates within protein modification; lipoprotein biosynthesis (N-acyl transfer). Catalyzes the phospholipid dependent N-acylation of the N-terminal cysteine of apolipoprotein, the last step in lipoprotein maturation. The sequence is that of Apolipoprotein N-acyltransferase from Prochlorococcus marinus (strain SARG / CCMP1375 / SS120).